Reading from the N-terminus, the 673-residue chain is Xaa-Pro aminopeptidase 2 (673 aa).

Positions 1 to 21 (MAQACWGCYPWLVLICACAWG) are cleaved as a signal peptide. Residues asparagine 34, asparagine 48, and asparagine 64 are each glycosylated (N-linked (GlcNAc...) asparagine). A substrate-binding site is contributed by arginine 115. Residues asparagine 277, asparagine 290, and asparagine 294 are each glycosylated (N-linked (GlcNAc...) asparagine). Histidine 429 provides a ligand contact to substrate. Aspartate 449 is a Mn(2+) binding site. Positions 449, 460, and 523 each coordinate Zn(2+). Residues histidine 523, histidine 532, and glutamate 554 each contribute to the substrate site. Zn(2+)-binding residues include glutamate 554 and glutamate 568. A lipid anchor (GPI-anchor amidated alanine) is attached at alanine 649. The propeptide at 650 to 673 (RAAPTTSLGSLMTVSALAILGWSV) is removed in mature form.

The protein belongs to the peptidase M24B family. As to quaternary structure, homotrimer. The cofactor is Zn(2+). In terms of processing, N-glycosylated. Kidney.

The protein resides in the cell membrane. The enzyme catalyses Release of any N-terminal amino acid, including proline, that is linked to proline, even from a dipeptide or tripeptide.. With respect to regulation, inhibited by apstatin and the metal ion chelator EDTA. Potently inhibited by the converting enzyme inhibitors cilazaprilat; enalaprilat; L155,212; ramiprilat and YS 980. Also inhibited to a lesser extent by indolaprilat; quinaprilat; spiraprilat; captopril and zofenoprilat. Its function is as follows. Membrane-bound metalloprotease which catalyzes the removal of a penultimate prolyl residue from the N-termini of peptides, such as Arg-Pro-Pro. May play a role in the metabolism of the vasodilator bradykinin. The protein is Xaa-Pro aminopeptidase 2 (XPNPEP2) of Sus scrofa (Pig).